Reading from the N-terminus, the 241-residue chain is Spheroidene monooxygenase (241 aa).

Belongs to the CrtA family. Requires heme as cofactor.

The catalysed reaction is spheroidene + 4 reduced [2Fe-2S]-[ferredoxin] + 2 O2 + 4 H(+) = spheroiden-2-one + 4 oxidized [2Fe-2S]-[ferredoxin] + 3 H2O. It catalyses the reaction spirilloxanthin + 4 reduced [2Fe-2S]-[ferredoxin] + 2 O2 + 4 H(+) = 2-oxospirilloxanthin + 4 oxidized [2Fe-2S]-[ferredoxin] + 3 H2O. It carries out the reaction 2-oxospirilloxanthin + 4 reduced [2Fe-2S]-[ferredoxin] + 2 O2 + 4 H(+) = 2,2'-dioxospirilloxanthin + 4 oxidized [2Fe-2S]-[ferredoxin] + 3 H2O. The enzyme catalyses spheroidene + 2 reduced [2Fe-2S]-[ferredoxin] + O2 + 2 H(+) = 2-hydroxyspheroidene + 2 oxidized [2Fe-2S]-[ferredoxin] + H2O. The catalysed reaction is 2-hydroxyspheroidene + 2 reduced [2Fe-2S]-[ferredoxin] + O2 + 2 H(+) = 2,2-dihydroxyspheroidene + 2 oxidized [2Fe-2S]-[ferredoxin] + H2O. It catalyses the reaction 2,2-dihydroxyspheroidene = spheroiden-2-one + H2O. It carries out the reaction spirilloxanthin + 2 reduced [2Fe-2S]-[ferredoxin] + O2 + 2 H(+) = 2-hydroxyspirilloxanthin + 2 oxidized [2Fe-2S]-[ferredoxin] + H2O. The enzyme catalyses 2-hydroxyspirilloxanthin + 2 reduced [2Fe-2S]-[ferredoxin] + O2 + 2 H(+) = 2,2-dihydroxyspirilloxanthin + 2 oxidized [2Fe-2S]-[ferredoxin] + H2O. The catalysed reaction is 2,2-dihydroxyspirilloxanthin = 2-oxospirilloxanthin + H2O. It catalyses the reaction 2-oxospirilloxanthin + 2 reduced [2Fe-2S]-[ferredoxin] + O2 + 2 H(+) = 2'-hydroxy-2-oxospirilloxanthin + 2 oxidized [2Fe-2S]-[ferredoxin] + H2O. It carries out the reaction 2'-hydroxy-2-oxospirilloxanthin + 2 reduced [2Fe-2S]-[ferredoxin] + O2 + 2 H(+) = 2',2'-dihydroxy-2-oxospirilloxanthin + 2 oxidized [2Fe-2S]-[ferredoxin] + H2O. The enzyme catalyses 2',2'-dihydroxy-2-oxospirilloxanthin = 2,2'-dioxospirilloxanthin + H2O. It functions in the pathway carotenoid biosynthesis; spheroidene biosynthesis. Involved in the biosynthesis of the carotenoid spheroidene. Catalyzes the introduction of one keto group at the C-2 position of spheroidene. In vitro, can also catalyze the introduction of two keto groups at the C-2 and C-2' positions of spirilloxanthin, but spirilloxanthin biosynthesis pathway is not present in R.capsulatus. This is Spheroidene monooxygenase from Rhodobacter capsulatus (strain ATCC BAA-309 / NBRC 16581 / SB1003).